Here is a 372-residue protein sequence, read N- to C-terminus: Heat-inducible transcription repressor HrcA (372 aa).

Positions 296-331 (VSSGYGRSGEAGEPAGNDPVGEPETESETESQTNDM) are disordered.

It belongs to the HrcA family.

Functionally, negative regulator of class I heat shock genes (grpE-dnaK-dnaJ and groELS operons). Prevents heat-shock induction of these operons. In Bifidobacterium longum subsp. infantis (strain ATCC 15697 / DSM 20088 / JCM 1222 / NCTC 11817 / S12), this protein is Heat-inducible transcription repressor HrcA.